A 472-amino-acid chain; its full sequence is Threonine synthase-like 2 (472 aa).

K113 is modified (N6-(pyridoxal phosphate)lysine).

It belongs to the threonine synthase family. Requires pyridoxal 5'-phosphate as cofactor.

In terms of biological role, acts as a catabolic phospho-lyase on both gamma- and beta-phosphorylated substrates. Degrades O-phospho-threonine (PThr) to alpha-ketobutyrate, ammonia and phosphate. This chain is Threonine synthase-like 2 (thnsl2), found in Xenopus laevis (African clawed frog).